A 213-amino-acid polypeptide reads, in one-letter code: Vacuolar ATPase assembly integral membrane protein vph2 (213 aa).

Transmembrane regions (helical) follow at residues 113–133 (ISAI…VWYC) and 142–162 (KIAL…FLYV).

The protein resides in the endoplasmic reticulum membrane. Functionally, required for vacuolar ATPase assembly. The chain is Vacuolar ATPase assembly integral membrane protein vph2 (vph2) from Schizosaccharomyces pombe (strain 972 / ATCC 24843) (Fission yeast).